A 389-amino-acid polypeptide reads, in one-letter code: Coproporphyrin III ferrochelatase (389 aa).

Fe-coproporphyrin III contacts are provided by serine 70 and tyrosine 139. Residue histidine 205 coordinates Fe(2+). A disordered region spans residues 207 to 229 (IPSTDAGKSGPSGRPDSGEPWGE). Glutamate 303 contributes to the Fe(2+) binding site.

This sequence belongs to the ferrochelatase family.

It is found in the cytoplasm. The enzyme catalyses Fe-coproporphyrin III + 2 H(+) = coproporphyrin III + Fe(2+). Its pathway is porphyrin-containing compound metabolism; protoheme biosynthesis. In terms of biological role, involved in coproporphyrin-dependent heme b biosynthesis. Catalyzes the insertion of ferrous iron into coproporphyrin III to form Fe-coproporphyrin III. The protein is Coproporphyrin III ferrochelatase of Leifsonia xyli subsp. xyli (strain CTCB07).